Here is a 230-residue protein sequence, read N- to C-terminus: MESISPVSNQLLQPTTTSSNSDRSRRKRKKKSSPSSVEKSPSPSISLEKWRSEKQQQIYSTKLVHALRELRISQQPSSSSSSSIPRGGRAVREVADRALAVAARGKTLWSRAILSKAVKLKFRKHKRQRISNPTTTTLTTGSIRSKKQRATVLRLKAKGLPAVQRKVKVLSRLVPGCRKQSLPVVLEETTDYIAAMEMQIRTMTAILSAVSSSPPPPTPGHEGGQTHMLG.

Residues 1-17 (MESISPVSNQLLQPTTT) show a composition bias toward polar residues. A disordered region spans residues 1–52 (MESISPVSNQLLQPTTTSSNSDRSRRKRKKKSSPSSVEKSPSPSISLEKWRS). Residues 33–46 (SPSSVEKSPSPSIS) show a composition bias toward low complexity. Residues 147-196 (KQRATVLRLKAKGLPAVQRKVKVLSRLVPGCRKQSLPVVLEETTDYIAAM) form the bHLH domain. The disordered stretch occupies residues 210-230 (VSSSPPPPTPGHEGGQTHMLG).

Homodimer. Interacts with PRE3.

It localises to the nucleus. Its function is as follows. Atypical bHLH transcription factor probably unable to bind DNA. Negatively regulates brassinosteroid signaling. The chain is Transcription factor bHLH147 (BHLH147) from Arabidopsis thaliana (Mouse-ear cress).